A 279-amino-acid chain; its full sequence is MATH domain and coiled-coil domain-containing protein At1g31390 (279 aa).

The region spanning 6 to 134 (EKKITWTIKN…NGDVKIVVEV (129 aa)) is the MATH domain. Residues 235-271 (KLDWLEKKLKEVCEARVQEIDEEWKDLTDLKENWSSD) are a coiled coil.

In Arabidopsis thaliana (Mouse-ear cress), this protein is MATH domain and coiled-coil domain-containing protein At1g31390.